The following is a 286-amino-acid chain: Lipoyl synthase (286 aa).

Cys-34, Cys-39, Cys-45, Cys-60, Cys-64, Cys-67, and Ser-271 together coordinate [4Fe-4S] cluster. Positions 46 to 260 (WESGTATFMI…EESAYSIGFS (215 aa)) constitute a Radical SAM core domain.

It belongs to the radical SAM superfamily. Lipoyl synthase family. [4Fe-4S] cluster serves as cofactor.

The protein resides in the cytoplasm. The enzyme catalyses [[Fe-S] cluster scaffold protein carrying a second [4Fe-4S](2+) cluster] + N(6)-octanoyl-L-lysyl-[protein] + 2 oxidized [2Fe-2S]-[ferredoxin] + 2 S-adenosyl-L-methionine + 4 H(+) = [[Fe-S] cluster scaffold protein] + N(6)-[(R)-dihydrolipoyl]-L-lysyl-[protein] + 4 Fe(3+) + 2 hydrogen sulfide + 2 5'-deoxyadenosine + 2 L-methionine + 2 reduced [2Fe-2S]-[ferredoxin]. The protein operates within protein modification; protein lipoylation via endogenous pathway; protein N(6)-(lipoyl)lysine from octanoyl-[acyl-carrier-protein]: step 2/2. Catalyzes the radical-mediated insertion of two sulfur atoms into the C-6 and C-8 positions of the octanoyl moiety bound to the lipoyl domains of lipoate-dependent enzymes, thereby converting the octanoylated domains into lipoylated derivatives. This is Lipoyl synthase from Picrophilus torridus (strain ATCC 700027 / DSM 9790 / JCM 10055 / NBRC 100828 / KAW 2/3).